A 564-amino-acid chain; its full sequence is Acetylcholine receptor subunit alpha-type deg-3 (564 aa).

An N-terminal signal peptide occupies residues 1–20; sequence MTLKIRTIIILFCVISVTTT. Topologically, residues 21-268 are extracellular; that stretch reads SQSLNATLKT…SLVIQRKPLY (248 aa). N-linked (GlcNAc...) asparagine glycosylation is found at N25, N37, N125, and N198. Cystine bridges form between C185/C199 and C248/C249. The next 3 membrane-spanning stretches (helical) occupy residues 269 to 289, 302 to 319, and 329 to 353; these read YLVN…TGFF, INLG…MLMV, and FVPL…LTSV. The Cytoplasmic segment spans residues 354-526; that stretch reads VLSVQGRRQY…WEFLATVLDR (173 aa). A helical transmembrane segment spans residues 527 to 547; that stretch reads FLLIVFVGAVVIVTAGLILVG.

This sequence belongs to the ligand-gated ion channel (TC 1.A.9) family. Acetylcholine receptor (TC 1.A.9.1) subfamily. The functional receptor is a heteromer of deg-3 and des-2. Interacts with ric-3; which is required for proper receptor folding.

Its subcellular location is the postsynaptic cell membrane. It is found in the cell membrane. In terms of biological role, subunit of the non-synaptic neuronal acetylcholine receptor, which may play a role in chemotaxis towards choline. After binding choline or acetylcholine, the AChR responds by an extensive change in conformation that affects all subunits and leads to opening of an ion-conducting channel across the plasma membrane. This chain is Acetylcholine receptor subunit alpha-type deg-3 (deg-3), found in Caenorhabditis elegans.